Here is a 365-residue protein sequence, read N- to C-terminus: Histidinol-phosphate aminotransferase (365 aa).

The residue at position 227 (lysine 227) is an N6-(pyridoxal phosphate)lysine.

Belongs to the class-II pyridoxal-phosphate-dependent aminotransferase family. Histidinol-phosphate aminotransferase subfamily. As to quaternary structure, homodimer. It depends on pyridoxal 5'-phosphate as a cofactor.

The catalysed reaction is L-histidinol phosphate + 2-oxoglutarate = 3-(imidazol-4-yl)-2-oxopropyl phosphate + L-glutamate. It functions in the pathway amino-acid biosynthesis; L-histidine biosynthesis; L-histidine from 5-phospho-alpha-D-ribose 1-diphosphate: step 7/9. The chain is Histidinol-phosphate aminotransferase from Campylobacter concisus (strain 13826).